Consider the following 368-residue polypeptide: Metacaspase-6 (368 aa).

Residues His86 and Cys139 contribute to the active site. The residue at position 139 (Cys139) is an S-nitrosocysteine. The interval 153–174 (GESTKKKKDSGDSSTINKETEA) is disordered.

It belongs to the peptidase C14B family. Proteolytically processed; by an autocatalytic mechanism. Expressed in roots and flower buds.

This is Metacaspase-6 (AMC6) from Arabidopsis thaliana (Mouse-ear cress).